The sequence spans 293 residues: Probable 2-(5''-triphosphoribosyl)-3'-dephosphocoenzyme-A synthase (293 aa).

Belongs to the CitG/MdcB family.

It catalyses the reaction 3'-dephospho-CoA + ATP = 2'-(5''-triphospho-alpha-D-ribosyl)-3'-dephospho-CoA + adenine. Involved in the formation of 2-(5''-phosphoribosyl)-3'-dephosphocoenzyme-A, the prosthetic group of the acyl-carrier protein of the malonate decarboxylase. In Pseudomonas paraeruginosa (strain DSM 24068 / PA7) (Pseudomonas aeruginosa (strain PA7)), this protein is Probable 2-(5''-triphosphoribosyl)-3'-dephosphocoenzyme-A synthase.